Consider the following 363-residue polypeptide: Strychnine O-methyltransferase (363 aa).

Residues G204, D227, D249, M250, and K263 each coordinate S-adenosyl-L-methionine. H267 (proton acceptor) is an active-site residue.

This sequence belongs to the class I-like SAM-binding methyltransferase superfamily. Cation-independent O-methyltransferase family.

It catalyses the reaction 10-hydroxystrychnine + S-adenosyl-L-methionine = beta-colubrine + S-adenosyl-L-homocysteine + H(+). The enzyme catalyses 11-demethylbrucine + S-adenosyl-L-methionine = brucine + S-adenosyl-L-homocysteine + H(+). It functions in the pathway alkaloid biosynthesis. Its function is as follows. O-methyltransferase involved in the biosynthesis of curare monoterpene indole alkaloids (MIAs), natural products such as strychnine, a neurotoxic compound used as a pesticide to control rodents, and its pharmacologically active derivatives, including brucine, used to regulate blood pressure. Curare alkaloids act as animal glycine receptor antagonists. Catalyzes the conversion of 10-OH strychnine to beta-colubrine, and of 11-deMe brucine to brucine. The sequence is that of Strychnine O-methyltransferase from Strychnos nux-vomica (Poison nut).